The sequence spans 475 residues: Erythroid membrane-associated protein (475 aa).

A signal peptide spans Met-1–Gly-29. One can recognise an Ig-like V-type domain in the interval His-30 to Ile-140. Residues His-30–Ala-155 lie on the Extracellular side of the membrane. A disulfide bridge links Cys-50 with Cys-126. Asn-132 carries N-linked (GlcNAc...) asparagine glycosylation. Residues Val-156–Ile-176 traverse the membrane as a helical segment. Topologically, residues Trp-177 to Phe-475 are cytoplasmic. The 199-residue stretch at Lys-220–Ser-418 folds into the B30.2/SPRY domain. Position 418 is a phosphoserine (Ser-418).

It belongs to the immunoglobulin superfamily. BTN/MOG family. Glycosylated. Expressed in erythroid-enriched bone marrow (at protein level). Highly expressed in bone marrow and to a lower extent in leukocytes, thymus, lymph node and spleen.

Its subcellular location is the cell membrane. The protein resides in the cytoplasm. Functionally, possible role as a cell-adhesion or receptor molecule of erythroid cells. This is Erythroid membrane-associated protein (ERMAP) from Homo sapiens (Human).